Consider the following 749-residue polypeptide: Chitin synthase G (749 aa).

5 consecutive transmembrane segments (helical) span residues cysteine 40 to proline 60, valine 73 to cysteine 93, phenylalanine 421 to isoleucine 441, proline 451 to isoleucine 471, and leucine 483 to alanine 503. A disordered region spans residues isoleucine 683 to valine 749. Positions leucine 697–glutamine 718 are enriched in polar residues. Asparagine 715 is a glycosylation site (N-linked (GlcNAc...) asparagine). The span at tyrosine 728 to tyrosine 742 shows a compositional bias: basic residues.

This sequence belongs to the chitin synthase family. Class VI subfamily.

The protein resides in the cell membrane. The enzyme catalyses [(1-&gt;4)-N-acetyl-beta-D-glucosaminyl](n) + UDP-N-acetyl-alpha-D-glucosamine = [(1-&gt;4)-N-acetyl-beta-D-glucosaminyl](n+1) + UDP + H(+). Functionally, polymerizes chitin, a structural polymer of the cell wall and septum, by transferring the sugar moiety of UDP-GlcNAc to the non-reducing end of the growing chitin polymer. Plays an important role in septal growth or maintenance. Mediates colony spore formation. This is Chitin synthase G from Aspergillus niger (strain ATCC MYA-4892 / CBS 513.88 / FGSC A1513).